Consider the following 705-residue polypeptide: Frizzled-4 (705 aa).

Residues 1–22 form the signal peptide; that stretch reads MKPTCILCLLVVILLHPRISKS. Residues 21-37 are compositionally biased toward low complexity; sequence KSSTSGNPSASSSSSSP. The segment at 21–40 is disordered; sequence KSSTSGNPSASSSSSSPPEI. Residues 23 to 233 are Extracellular-facing; sequence STSGNPSASS…FTPAEKHLAE (211 aa). The 123-residue stretch at 41–163 folds into the FZ domain; it reads PAFRQCETIR…NNHETMCMEG (123 aa). Disulfide bonds link Cys46–Cys107, Cys54–Cys100, Cys91–Cys130, Cys119–Cys160, and Cys123–Cys147. An N-linked (GlcNAc...) asparagine glycan is attached at Asn60. Residues 234–254 form a helical membrane-spanning segment; it reads IWVSTWAYAALGLALVATVCL. The Cytoplasmic segment spans residues 255–270; that stretch reads LASDGSRLASAKWSRL. The helical transmembrane segment at 271-291 threads the bilayer; it reads LSPLIWCHNMVTLGWAVRFMV. Topologically, residues 292–322 are extracellular; that stretch reads GRTGTACGTDPQAPNESLLTVDGLSNASCAS. N-linked (GlcNAc...) asparagine glycosylation is found at Asn306 and Asn317. Residues 323-343 traverse the membrane as a helical segment; it reads VFLMRYYFGMAACAWWAVLCL. Residues 344–386 lie on the Cytoplasmic side of the membrane; it reads GWHRDIRRHSPDSKGHVVIPSNFGGSPAKRNSAKTAQQDLTQN. The helical transmembrane segment at 387–407 threads the bilayer; sequence NFVCFVAWGLPAFQTSAVIVA. The Extracellular segment spans residues 408–430; it reads RFVDADELLGACFVGNQSDKALQ. Asn423 is a glycosylation site (N-linked (GlcNAc...) asparagine). The helical transmembrane segment at 431–451 threads the bilayer; the sequence is ILVATPVFCYWIFGSMNLISG. Topologically, residues 452 to 483 are cytoplasmic; that stretch reads YLVHCRTKEILRNSNALSVQQQLQQLSAHSSS. Residues 484–504 traverse the membrane as a helical segment; that stretch reads GIGIFLFIYGLACAMLLLAVI. Topologically, residues 505 to 529 are extracellular; sequence YEFANIDVWLGSGDTNTPLWPFLLR. Residues 530 to 550 traverse the membrane as a helical segment; sequence AFMELMLGICCFAWVLGPSIS. Over 551-705 the chain is Cytoplasmic; sequence TLYKRQVSNG…LQQYGNETLL (155 aa). The disordered stretch occupies residues 635 to 681; that stretch reads RSVHHQQRHSPHHHHHQQQQHHQFHPHHNHQHHSTSSHRLYYPPGSY. The span at 636 to 670 shows a compositional bias: basic residues; it reads SVHHQQRHSPHHHHHQQQQHHQFHPHHNHQHHSTS. The PDZ-binding motif lies at 703-705; that stretch reads TLL.

This sequence belongs to the G-protein coupled receptor Fz/Smo family.

The protein localises to the membrane. In terms of biological role, receptor for Wnt proteins. Most of frizzled receptors are coupled to the beta-catenin canonical signaling pathway, which leads to the activation of disheveled proteins, inhibition of GSK-3 kinase, nuclear accumulation of beta-catenin and activation of Wnt target genes. A second signaling pathway involving PKC and calcium fluxes has been seen for some family members, but it is not yet clear if it represents a distinct pathway or if it can be integrated in the canonical pathway, as PKC seems to be required for Wnt-mediated inactivation of GSK-3 kinase. Both pathways seem to involve interactions with G-proteins. May be involved in transduction and intercellular transmission of polarity information during tissue morphogenesis and/or in differentiated tissues. Required to coordinate the cytoskeletons of epidermal cells to produce a parallel array of cuticular hairs and bristles. The chain is Frizzled-4 (fz4) from Drosophila melanogaster (Fruit fly).